Reading from the N-terminus, the 519-residue chain is Tachykinin-like peptides receptor 99D (519 aa).

Residues 1–100 (MENRSDFEAD…SFAFVVPWWR (100 aa)) are Extracellular-facing. Asn3, Asn19, Asn22, and Asn61 each carry an N-linked (GlcNAc...) asparagine glycan. The helical transmembrane segment at 101 to 123 (QVLWSILFGGMVIVATGGNLIVV) threads the bilayer. Residues 124–134 (WIVMTTKRMRT) lie on the Cytoplasmic side of the membrane. A helical membrane pass occupies residues 135 to 155 (VTNYFIVNLSIADAMVSSLNV). At 156–175 (TFNYYYMLDSDWPFGEFYCK) the chain is on the extracellular side. Cys174 and Cys254 are disulfide-bonded. The chain crosses the membrane as a helical span at residues 176 to 197 (LSQFIAMLSICASVFTLMAISI). The Cytoplasmic segment spans residues 198-217 (DRYVAIIRPLQPRMSKRCNL). A helical transmembrane segment spans residues 218–238 (AIAAVIWLASTLISCPMMIIY). The Extracellular portion of the chain corresponds to 239–270 (RTEEVPVRGLSNRTVCYPEWPDGPTNHSTMES). The chain crosses the membrane as a helical span at residues 271-292 (LYNILIIILTYFLPIVSMTVTY). The Cytoplasmic portion of the chain corresponds to 293–324 (SRVGIELWGSKTIGECTPRQVENVRSKRRVVK). The chain crosses the membrane as a helical span at residues 325-346 (MMIVVVLIFAICWLPFHSYFII). At 347–361 (TSCYPAITEAPFIQE) the chain is on the extracellular side. Residues 362-384 (LYLAIYWLAMSNSMYNPIIYCWM) form a helical membrane-spanning segment. Residues 385–519 (NSRFRYGFKM…STANTTQLLS (135 aa)) lie on the Cytoplasmic side of the membrane. Residue Cys399 is the site of S-palmitoyl cysteine attachment. Residues 444–519 (PSSPKSHRIS…STANTTQLLS (76 aa)) are disordered. Polar residues-rich tracts occupy residues 454 to 465 (HSGTGRSATLRN) and 487 to 499 (SYQQEMQQRWSGP). Low complexity predominate over residues 500-519 (NSATAVTNSSSTANTTQLLS).

This sequence belongs to the G-protein coupled receptor 1 family. During late embryogenesis (stages 11-15), expressed in the brain and in a specific subset of neurons in each neuromere of the developing ventral ganglion. Expressed in the cortex of the adult brain, which contains the neuronal cell bodies.

The protein resides in the cell membrane. In terms of biological role, receptor for tachykinin-like peptides. This is Tachykinin-like peptides receptor 99D (TkR99D) from Drosophila melanogaster (Fruit fly).